Reading from the N-terminus, the 361-residue chain is Chalcone synthase A (361 aa).

Cys168 is an active-site residue.

The protein belongs to the thiolase-like superfamily. Chalcone/stilbene synthases family.

The enzyme catalyses (E)-4-coumaroyl-CoA + 3 malonyl-CoA + 3 H(+) = 2',4,4',6'-tetrahydroxychalcone + 3 CO2 + 4 CoA. The protein operates within secondary metabolite biosynthesis; flavonoid biosynthesis. Its function is as follows. The primary product of this enzyme is 4,2',4',6'-tetrahydroxychalcone (also termed naringenin-chalcone or chalcone) which can under specific conditions spontaneously isomerize into naringenin. This is Chalcone synthase A (CHSA) from Ipomoea cordatotriloba (Tievine).